A 642-amino-acid polypeptide reads, in one-letter code: Capsid vertex component 2 (642 aa).

Residues 1-48 are interaction with major capsid protein/MCP; that stretch reads MSLLHTFWRLPVAVFFEPHEENVLRCPERVLRRLLEDAAVTMRGGGWR. A disordered region spans residues 97 to 125; it reads DEGPSPRTLLQPPCRPRSSSPGTGVAGAS.

This sequence belongs to the herpesviridae CVC2 protein family. Heterodimerizes with CVC1. Interacts with major capsid protein/MCP and triplex capsid protein 1/TRX1 at the pentamer vertices. Interacts with the large tegument protein/LTP.

It is found in the virion. The protein resides in the host nucleus. Its function is as follows. Capsid vertex-specific component that plays a role during viral DNA encapsidation, assuring correct genome cleavage and presumably stabilizing capsids that contain full-length viral genomes. Participates in the interaction between the capsid and the tegument through interaction with the large tegument protein/LTP. In Homo sapiens (Human), this protein is Capsid vertex component 2.